A 238-amino-acid polypeptide reads, in one-letter code: tRNA (guanine-N(7)-)-methyltransferase (238 aa).

The span at 1–12 (MTDTAENQTPND) shows a compositional bias: polar residues. Positions 1 to 20 (MTDTAENQTPNDRQAGHPRS) are disordered. Residues E70, D95, D122, and D145 each coordinate S-adenosyl-L-methionine. D145 is an active-site residue. Substrate contacts are provided by residues K149, D181, and 216–219 (TKFE).

It belongs to the class I-like SAM-binding methyltransferase superfamily. TrmB family.

The catalysed reaction is guanosine(46) in tRNA + S-adenosyl-L-methionine = N(7)-methylguanosine(46) in tRNA + S-adenosyl-L-homocysteine. Its pathway is tRNA modification; N(7)-methylguanine-tRNA biosynthesis. Catalyzes the formation of N(7)-methylguanine at position 46 (m7G46) in tRNA. This Neisseria gonorrhoeae (strain NCCP11945) protein is tRNA (guanine-N(7)-)-methyltransferase.